We begin with the raw amino-acid sequence, 436 residues long: tRNA(Ile)-lysidine synthase (436 aa).

21–26 (SGGVDS) is a binding site for ATP.

Belongs to the tRNA(Ile)-lysidine synthase family.

It localises to the cytoplasm. It catalyses the reaction cytidine(34) in tRNA(Ile2) + L-lysine + ATP = lysidine(34) in tRNA(Ile2) + AMP + diphosphate + H(+). In terms of biological role, ligates lysine onto the cytidine present at position 34 of the AUA codon-specific tRNA(Ile) that contains the anticodon CAU, in an ATP-dependent manner. Cytidine is converted to lysidine, thus changing the amino acid specificity of the tRNA from methionine to isoleucine. This chain is tRNA(Ile)-lysidine synthase, found in Aster yellows witches'-broom phytoplasma (strain AYWB).